The sequence spans 349 residues: tRNA pseudouridine synthase D (349 aa).

Residue phenylalanine 27 coordinates substrate. Aspartate 80 serves as the catalytic Nucleophile. Asparagine 129 serves as a coordination point for substrate. Positions 155–303 (GVPNYFGAQR…VEAARRAMLL (149 aa)) constitute a TRUD domain. Residue phenylalanine 329 coordinates substrate.

The protein belongs to the pseudouridine synthase TruD family.

It carries out the reaction uridine(13) in tRNA = pseudouridine(13) in tRNA. In terms of biological role, responsible for synthesis of pseudouridine from uracil-13 in transfer RNAs. This is tRNA pseudouridine synthase D from Escherichia coli O81 (strain ED1a).